The sequence spans 1172 residues: Lysylphosphatidylglycerol biosynthesis bifunctional protein LysX (1172 aa).

The interval 1 to 34 (MGLHLTVPGLRRDGRGVQSNSHDTSSKTTADISR) is disordered. Residues 1–663 (MGLHLTVPGL…LLHHDGSAPD (663 aa)) form a phosphatidylglycerol lysyltransferase region. Positions 17-31 (VQSNSHDTSSKTTAD) are enriched in polar residues. The next 7 membrane-spanning stretches (helical) occupy residues 80–100 (VPAA…LASV), 122–142 (FPDT…ALTA), 146–166 (IAWL…AAEI), 177–197 (FGEN…VLGY), 214–234 (AVWL…VELF), 272–292 (AIFG…LFLS), and 612–632 (VIPR…LPFS). Residues 664 to 1172 (VSGLRQVGLT…TLPFPLAKPH (509 aa)) are lysine--tRNA ligase. Residues 726 to 804 (VSVSGRIMRI…SLIVSGWRLI (79 aa)) constitute a DNA-binding region (OB). Mg(2+)-binding residues include aspartate 1084 and glutamate 1091.

It in the N-terminal section; belongs to the LPG synthetase family. This sequence in the C-terminal section; belongs to the class-II aminoacyl-tRNA synthetase family. It depends on Mg(2+) as a cofactor.

It localises to the cell membrane. The enzyme catalyses tRNA(Lys) + L-lysine + ATP = L-lysyl-tRNA(Lys) + AMP + diphosphate. The catalysed reaction is L-lysyl-tRNA(Lys) + a 1,2-diacyl-sn-glycero-3-phospho-(1'-sn-glycerol) = a 1,2-diacyl-sn-glycero-3-phospho-1'-(3'-O-L-lysyl)-sn-glycerol + tRNA(Lys). Its function is as follows. Catalyzes the production of L-lysyl-tRNA(Lys)transfer and the transfer of a lysyl group from L-lysyl-tRNA(Lys) to membrane-bound phosphatidylglycerol (PG), which produces lysylphosphatidylglycerol (LPG), one of the components of the bacterial membrane with a positive net charge. LPG synthesis contributes to the resistance to cationic antimicrobial peptides (CAMPs) and likely protects M.tuberculosis against the CAMPs produced by competiting microorganisms (bacteriocins). In fact, the modification of anionic phosphatidylglycerol with positively charged L-lysine results in repulsion of the peptides. The chain is Lysylphosphatidylglycerol biosynthesis bifunctional protein LysX (lysX) from Mycobacterium tuberculosis (strain F11).